A 97-amino-acid chain; its full sequence is Small integral membrane protein 8 (97 aa).

The disordered stretch occupies residues M1–G24. Over residues T9 to F20 the composition is skewed to basic and acidic residues. A helical membrane pass occupies residues P48–I70.

Belongs to the SMIM8 family.

The protein resides in the membrane. The protein is Small integral membrane protein 8 (SMIM8) of Homo sapiens (Human).